We begin with the raw amino-acid sequence, 57 residues long: Sperm protamine P1-type (57 aa).

The interval 1 to 57 (MARYRHNRSRSRSRHRRRRRGHRGGRYRRRRRRGRYGHRRHHRGHSRRRRKRRRSRH) is disordered.

The protein belongs to the protamine P1 family. As to expression, testis.

Its subcellular location is the nucleus. It localises to the chromosome. Its function is as follows. Protamines substitute for histones in the chromatin of sperm during the haploid phase of spermatogenesis. They compact sperm DNA into a highly condensed, stable and inactive complex. This chain is Sperm protamine P1-type, found in Alligator mississippiensis (American alligator).